The primary structure comprises 255 residues: Small ribosomal subunit protein uS10m (255 aa).

Residues 1–32 (MALPAARSALSARAFIRPAAALNAAASSSRYL) constitute a mitochondrion transit peptide. Disordered stretches follow at residues 30-52 (RYLSTTTPRHDAPVATTPGNSET) and 220-255 (SEGEGEDQAEGVQKIVDAAREEKPAEKLKEEEAKSS). The segment covering 236 to 255 (DAAREEKPAEKLKEEEAKSS) has biased composition (basic and acidic residues).

This sequence belongs to the universal ribosomal protein uS10 family. In terms of assembly, part of the mitochondrial small ribosomal subunit.

The protein resides in the mitochondrion. Its function is as follows. Involved in mitochondrial genome encoded proteins translation. Involved in the binding of tRNA to the ribosomes. The polypeptide is Small ribosomal subunit protein uS10m (RSM10) (Cryptococcus neoformans var. neoformans serotype D (strain B-3501A) (Filobasidiella neoformans)).